A 78-amino-acid chain; its full sequence is Large ribosomal subunit protein bL28 (78 aa).

Residues 1 to 20 form a disordered region; sequence MSRVCQVTGKRPVTGNNRSH.

The protein belongs to the bacterial ribosomal protein bL28 family.

This chain is Large ribosomal subunit protein bL28, found in Vibrio atlanticus (strain LGP32) (Vibrio splendidus (strain Mel32)).